A 343-amino-acid polypeptide reads, in one-letter code: Phosphatidylglycerol--prolipoprotein diacylglyceryl transferase 1 (343 aa).

The next 4 membrane-spanning stretches (helical) occupy residues 19 to 39 (VPLR…VWLG), 54 to 74 (ADIA…YHVI), 93 to 113 (IWEG…GAWI), and 119 to 139 (GVPM…AQAI). Position 141 (Arg141) interacts with a 1,2-diacyl-sn-glycero-3-phospho-(1'-sn-glycerol). The next 3 helical transmembrane spans lie at 176-196 (HPTF…VIWA), 202-224 (LGHG…WIEY), and 238-258 (LNNW…VLSA). The segment at 269–343 (EPGAETAAGD…TNGADSAKKG (75 aa)) is disordered. The span at 283 to 293 (ADKDVKGTKDA) shows a compositional bias: basic and acidic residues. Positions 314 to 324 (APEDTSGADEA) are enriched in acidic residues.

This sequence belongs to the Lgt family.

The protein localises to the cell membrane. It catalyses the reaction L-cysteinyl-[prolipoprotein] + a 1,2-diacyl-sn-glycero-3-phospho-(1'-sn-glycerol) = an S-1,2-diacyl-sn-glyceryl-L-cysteinyl-[prolipoprotein] + sn-glycerol 1-phosphate + H(+). It participates in protein modification; lipoprotein biosynthesis (diacylglyceryl transfer). In terms of biological role, catalyzes the transfer of the diacylglyceryl group from phosphatidylglycerol to the sulfhydryl group of the N-terminal cysteine of a prolipoprotein, the first step in the formation of mature lipoproteins. This is Phosphatidylglycerol--prolipoprotein diacylglyceryl transferase 1 from Streptomyces coelicolor (strain ATCC BAA-471 / A3(2) / M145).